The sequence spans 557 residues: Arginine--tRNA ligase (557 aa).

Residues 132-142 (ANPTGDLHLGH) carry the 'HIGH' region motif.

It belongs to the class-I aminoacyl-tRNA synthetase family. In terms of assembly, monomer.

It localises to the cytoplasm. It carries out the reaction tRNA(Arg) + L-arginine + ATP = L-arginyl-tRNA(Arg) + AMP + diphosphate. The sequence is that of Arginine--tRNA ligase from Geobacillus kaustophilus (strain HTA426).